Here is an 885-residue protein sequence, read N- to C-terminus: Exosome complex component 10 (885 aa).

Over residues 1–10 (MAPPSPREHQ) the composition is skewed to basic and acidic residues. Disordered regions lie at residues 1 to 23 (MAPP…PDAE) and 210 to 232 (KPLP…EDLD). K19 participates in a covalent cross-link: Glycyl lysine isopeptide (Lys-Gly) (interchain with G-Cter in SUMO2). Positions 217 to 230 (SKERRERPQDRPED) are enriched in basic and acidic residues. Residues 289–455 (HVVSSLDELV…YIYDRMRLEL (167 aa)) form the 3'-5' exonuclease domain. Mg(2+) is bound by residues D313, E315, D371, and D440. One can recognise an HRDC domain in the interval 503–583 (NSQQLTAFQL…QQAREMPLLK (81 aa)). K583 is covalently cross-linked (Glycyl lysine isopeptide (Lys-Gly) (interchain with G-Cter in SUMO1); alternate). K583 is covalently cross-linked (Glycyl lysine isopeptide (Lys-Gly) (interchain with G-Cter in SUMO2); alternate). K710 is covalently cross-linked (Glycyl lysine isopeptide (Lys-Gly) (interchain with G-Cter in SUMO2)). The disordered stretch occupies residues 730-885 (VQKEPKEAAK…RGFRHNWPKR (156 aa)). Composition is skewed to basic and acidic residues over residues 732–756 (KEPK…KEES) and 776–794 (ATKK…EQKQ). The residue at position 821 (S821) is a Phosphoserine. Glycyl lysine isopeptide (Lys-Gly) (interchain with G-Cter in SUMO2) cross-links involve residues K833, K859, and K873.

Belongs to the exosome component 10/RRP6 family. In terms of assembly, component of the RNA exosome complex. The catalytically inactive RNA exosome core complex (Exo-9) associates with the catalytic subunit EXOSC10/RRP6 (via its N-terminus). Exo-9 may associate with DIS3 to form the nucleolar exosome complex, or DIS3L to form the cytoplasmic exosome complex. The RNA exosome complex interacts with cofactors C1D/RRP47, MPHOSPH6/MPP6 and MTREX/MTR4. Interacts with MTREX; the interaction with MTREX mediates the association of MTREX with nuclear RNA exosomes. Part of the small subunit (SSU) processome, composed of more than 70 proteins and the RNA chaperone small nucleolar RNA (snoRNA) U3. Interacts with ALYREF/THOC4. Interacts with DHX36; this interaction occurs in a RNase-insensitive manner. Interacts with NRDE2. Interacts (via C-terminus) with USP36 (via C-terminus); the interaction is facilitated by the association with RNA and promotes sumoylation of EXOSC10. It depends on Mg(2+) as a cofactor. Post-translationally, sumoylated by USP36; sumoylation does not significantly affect EXOSC10 nucleolar localization and association with core exosome and USP36, but regulates the nucleolar RNA exosome activity in rRNA processing by promoting binding of EXOSC10 to pre-rRNAs. Effects of sumoylation on EXOSC10 levels vary between different studies. Sumoylation of EXOSC10 is required for the modulation of EXOSC10 effects on cellular protein translation and cell proliferation. Sumoylation is promoted by mild hypothermia. As to expression, expressed in testis (at protein level).

Its subcellular location is the cytoplasm. The protein localises to the nucleus. It is found in the nucleolus. The protein resides in the nucleoplasm. Its function is as follows. Catalytic component of the RNA exosome complex which has 3'-&gt;5' exoribonuclease activity and participates in a multitude of cellular RNA processing and degradation events. In the nucleus, the RNA exosome complex is involved in proper maturation of stable RNA species such as rRNA, snRNA and snoRNA, in the elimination of RNA processing by-products and non-coding 'pervasive' transcripts, such as antisense RNA species and promoter-upstream transcripts (PROMPTs), and of mRNAs with processing defects, thereby limiting or excluding their export to the cytoplasm. Part of the small subunit (SSU) processome, first precursor of the small eukaryotic ribosomal subunit. During the assembly of the SSU processome in the nucleolus, many ribosome biogenesis factors, an RNA chaperone and ribosomal proteins associate with the nascent pre-rRNA and work in concert to generate RNA folding, modifications, rearrangements and cleavage as well as targeted degradation of pre-ribosomal RNA by the RNA exosome. The RNA exosome may be involved in Ig class switch recombination (CSR) and/or Ig variable region somatic hypermutation (SHM) by targeting AICDA deamination activity to transcribed dsDNA substrates. In the cytoplasm, the RNA exosome complex is involved in general mRNA turnover and specifically degrades inherently unstable mRNAs containing AU-rich elements (AREs) within their 3' untranslated regions, and in RNA surveillance pathways, preventing translation of aberrant mRNAs. It seems to be involved in degradation of histone mRNA. EXOSC10 is required for nucleolar localization of C1D and probably mediates the association of MTREX, C1D and MPHOSPH6 with the RNA exosome involved in the maturation of 5.8S rRNA. Plays a role in the recruitment of replication protein A complex (RPA) and RAD51 to DNA double-strand breaks caused by irradiation, contributing to DNA repair by homologous recombination. Regulates levels of damage-induced RNAs in order to prevent DNA-RNA hybrid formation at DNA double-strand breaks and limit DNA end resection after damage. Plays a role in oocyte development, maturation and survival. Required for normal testis development and mitotic division of spermatogonia. Plays a role in proper embryo development. Required for global protein translation. Required for cell proliferation. The polypeptide is Exosome complex component 10 (Rattus norvegicus (Rat)).